The primary structure comprises 328 residues: V-set and immunoglobulin domain-containing protein 2 (328 aa).

The first 24 residues, Met1–Ala24, serve as a signal peptide directing secretion. In terms of domain architecture, Ig-like V-type spans Val25–Ile138. At Val25–Ala244 the chain is on the extracellular side. Cysteines 46 and 122 form a disulfide. N-linked (GlcNAc...) asparagine glycosylation is found at Asn139, Asn207, and Asn232. The Ig-like C2-type domain maps to Pro145 to Ser234. An intrachain disulfide couples Cys167 to Cys218. The helical transmembrane segment at Gly245–Ile265 threads the bilayer. At Arg266–Val328 the chain is on the cytoplasmic side.

Expressed in the stomach, colon and prostate.

The protein localises to the membrane. The protein is V-set and immunoglobulin domain-containing protein 2 (Vsig2) of Mus musculus (Mouse).